Here is a 133-residue protein sequence, read N- to C-terminus: Vascular endothelial growth factor homolog (133 aa).

The N-terminal stretch at 1 to 20 (MKLLVGILVAVCLHQYLLNA) is a signal peptide. 3 disulfide bridges follow: Cys-36–Cys-78, Cys-67–Cys-112, and Cys-71–Cys-114. Residue Asn-85 is glycosylated (N-linked (GlcNAc...) asparagine; by host).

It belongs to the PDGF/VEGF growth factor family. As to quaternary structure, homodimer; disulfide-linked.

The protein localises to the secreted. In terms of biological role, induces endothelial proliferation. The polypeptide is Vascular endothelial growth factor homolog (Orf virus (strain NZ2) (OV NZ-2)).